A 383-amino-acid polypeptide reads, in one-letter code: DNA dC-&gt;dU-editing enzyme APOBEC-3G (383 aa).

The tract at residues 1–60 is essential for cytoplasmic localization; that stretch reads MKPQFRNTVERMYRDTFFYNFNNRPILSRRNTVWLCYEVKTRGPSMPTWDAKIFRGQVYS. 2 consecutive CMP/dCMP-type deaminase domains span residues 29–138 and 214–327; these read RRNT…LRVL and GQHE…LRTL. The residue at position 32 (Thr-32) is a Phosphothreonine; by PKA. The Zn(2+) site is built by His-65, Cys-97, and Cys-100. The segment at 209–335 is necessary for homooligomerization; it reads KPWVSGQHET…TLHRDGAKIA (127 aa). Residues 213–215 are interaction with DNA; the sequence is SGQ. Thr-218 carries the phosphothreonine; by PKA and CAMK2 modification. Residue His-257 coordinates Zn(2+). Glu-259 serves as the catalytic Proton donor. Residues Cys-287 and Cys-290 each contribute to the Zn(2+) site. The segment at 312–319 is interaction with DNA; that stretch reads RIYDDQGR.

The protein belongs to the cytidine and deoxycytidylate deaminase family. Homodimer. It depends on Zn(2+) as a cofactor.

Its subcellular location is the cytoplasm. The protein resides in the nucleus. The protein localises to the P-body. It catalyses the reaction a 2'-deoxycytidine in single-stranded DNA + H2O + H(+) = a 2'-deoxyuridine in single-stranded DNA + NH4(+). Functionally, DNA deaminase (cytidine deaminase) which acts as an inhibitor of retrovirus replication and retrotransposon mobility. After the penetration of retroviral nucleocapsids into target cells of infection and the initiation of reverse transcription, it can induce the conversion of cytosine to uracil in the minus-sense single-strand viral DNA, leading to G-to-A hypermutations in the subsequent plus-strand viral DNA. The resultant detrimental levels of mutations in the proviral genome, along with a deamination-independent mechanism that works prior to the proviral integration, together exert efficient antiretroviral effects in infected target cells. Selectively targets single-stranded DNA and does not deaminate double-stranded DNA or single- or double-stranded RNA. The chain is DNA dC-&gt;dU-editing enzyme APOBEC-3G (APOBEC3G) from Papio anubis (Olive baboon).